A 261-amino-acid chain; its full sequence is 5'-nucleotidase SurE (261 aa).

The a divalent metal cation site is built by Asp-10, Asp-11, Ser-41, and Asn-96.

It belongs to the SurE nucleotidase family. The cofactor is a divalent metal cation.

The protein localises to the cytoplasm. The enzyme catalyses a ribonucleoside 5'-phosphate + H2O = a ribonucleoside + phosphate. In terms of biological role, nucleotidase that shows phosphatase activity on nucleoside 5'-monophosphates. This Methanococcoides burtonii (strain DSM 6242 / NBRC 107633 / OCM 468 / ACE-M) protein is 5'-nucleotidase SurE.